The primary structure comprises 55 residues: Cop-6 protein (55 aa).

It belongs to the transcriptional regulatory CopG/NikR family.

In terms of biological role, acts in trans as a negative regulatory element in pE194 replication. The chain is Cop-6 protein from Staphylococcus aureus.